The sequence spans 1578 residues: E3 ubiquitin-protein ligase HECW2 (1578 aa).

Serine 48 carries the phosphoserine modification. The C2 domain maps to 171–298; the sequence is MEGGASGSLH…LERQAGDQML (128 aa). Disordered stretches follow at residues 341–453 and 496–802; these read HTVN…FPTD and IDDG…PSVR. Over residues 386-406 the composition is skewed to polar residues; sequence RTSSTLEIDTEDLISTSSRNS. Residues 518-532 show a composition bias toward basic and acidic residues; that stretch reads ASIHETASLEERLEN. Residues 559–576 are compositionally biased toward polar residues; the sequence is SADQGSTELCSSQEVDQP. Residues 577–593 are compositionally biased toward low complexity; it reads TSGADAGASDTSGGSRR. Polar residues-rich tracts occupy residues 597–614, 643–664, and 688–708; these read ETES…SSET, SSCN…SSLE, and PTSS…SSLP. Composition is skewed to low complexity over residues 721–735, 746–755, and 769–782; these read AAEA…ELGE, AAAAAPAAAA, and AQGA…QEEG. The segment at 737–1074 is interaction with TP73; the sequence is WQRRGSLEGA…PRPSSTFNTV (338 aa). A WW 1 domain is found at 813-846; sequence EALPPNWEARIDSHGRIFYVDHVNRTTTWQRPTA. A coiled-coil region spans residues 853 to 880; it reads LQRSNSIQQMEQLNRRYQSIRRTMTNER. Phosphoserine is present on residues serine 858 and serine 915. Positions 991–1024 constitute a WW 2 domain; the sequence is LELPRGWEMKHDHQGKAFFVDHNSRTTTFIDPRL. Disordered regions lie at residues 1030–1075 and 1167–1193; these read RPTS…NTVS and CQSP…RAPA. Positions 1037 to 1046 are enriched in basic residues; that stretch reads HRQHLTRQRS. Residues 1167 to 1187 are compositionally biased toward polar residues; the sequence is CQSPRGSPVSSPQNSPGTQRA. The residue at position 1181 (serine 1181) is a Phosphoserine. The HECT domain occupies 1243 to 1578; the sequence is SRKDLQRNKL…VEETSTFGLE (336 aa). The active-site Glycyl thioester intermediate is cysteine 1546.

As to quaternary structure, interacts with TP73. Interacts with FZR1.

The protein localises to the cytoplasm. It is found in the cytoskeleton. It localises to the spindle. It carries out the reaction S-ubiquitinyl-[E2 ubiquitin-conjugating enzyme]-L-cysteine + [acceptor protein]-L-lysine = [E2 ubiquitin-conjugating enzyme]-L-cysteine + N(6)-ubiquitinyl-[acceptor protein]-L-lysine.. It participates in protein modification; protein ubiquitination. E3 ubiquitin-protein ligase that mediates ubiquitination of TP73. Acts to stabilize TP73 and enhance activation of transcription by TP73. Involved in the regulation of mitotic metaphase/anaphase transition. The protein is E3 ubiquitin-protein ligase HECW2 (Hecw2) of Mus musculus (Mouse).